A 400-amino-acid polypeptide reads, in one-letter code: Cytochrome b (400 aa).

The helical transmembrane segment at 47–67 (LGSIAGIALVIQIITGVILAM) threads the bilayer. Histidine 97 and histidine 111 together coordinate heme b. The next 8 membrane-spanning stretches (helical) occupy residues 98–118 (AVGA…GLYY), 131–151 (IGII…VLPW), 166–186 (FSAI…GFSV), 194–214 (FFSL…LHLV), 247–267 (FVGF…EPNY), 306–326 (LGGV…PWLD), 341–361 (IAFW…GQPA), and 368–388 (ISRF…PLIG). Residues histidine 198 and histidine 212 each coordinate heme b.

It belongs to the cytochrome b family. In terms of assembly, the main subunits of complex b-c1 are: cytochrome b, cytochrome c1 and the Rieske protein. Heme b serves as cofactor.

The protein localises to the cell membrane. Functionally, component of the ubiquinol-cytochrome c reductase complex (complex III or cytochrome b-c1 complex), which is a respiratory chain that generates an electrochemical potential coupled to ATP synthesis. The chain is Cytochrome b (petB) from Rickettsia bellii (strain RML369-C).